The chain runs to 244 residues: RAD51-like protein 1 (244 aa).

In terms of assembly, interacts with brc-2 and rad-51.

It is found in the nucleus. In terms of biological role, has a role in the homologous recombination repair (HRR) of genomic DNA during meiosis. Required for rad-51 recruitment onto ssDNA gaps generated at stalled replication fork barriers. This is RAD51-like protein 1 from Caenorhabditis briggsae.